A 392-amino-acid polypeptide reads, in one-letter code: NADH dehydrogenase-like protein YjlD (392 aa).

It belongs to the NADH dehydrogenase family. Requires FAD as cofactor.

The chain is NADH dehydrogenase-like protein YjlD (yjlD) from Bacillus subtilis (strain 168).